Reading from the N-terminus, the 208-residue chain is Small ribosomal subunit protein uS4 (208 aa).

The region spanning 99-165 (RRLDNVVFQL…PRLKEILSSL (67 aa)) is the S4 RNA-binding domain.

Belongs to the universal ribosomal protein uS4 family. In terms of assembly, part of the 30S ribosomal subunit. Contacts protein S5. The interaction surface between S4 and S5 is involved in control of translational fidelity.

Its function is as follows. One of the primary rRNA binding proteins, it binds directly to 16S rRNA where it nucleates assembly of the body of the 30S subunit. Functionally, with S5 and S12 plays an important role in translational accuracy. This Desulfitobacterium hafniense (strain Y51) protein is Small ribosomal subunit protein uS4.